We begin with the raw amino-acid sequence, 234 residues long: Glucosamine-6-phosphate deaminase (234 aa).

D62 serves as the catalytic Proton acceptor; for enolization step. The active-site For ring-opening step is the N128. Catalysis depends on H130, which acts as the Proton acceptor; for ring-opening step. The active-site For ring-opening step is the E135.

It belongs to the glucosamine/galactosamine-6-phosphate isomerase family. NagB subfamily.

The enzyme catalyses alpha-D-glucosamine 6-phosphate + H2O = beta-D-fructose 6-phosphate + NH4(+). It functions in the pathway amino-sugar metabolism; N-acetylneuraminate degradation; D-fructose 6-phosphate from N-acetylneuraminate: step 5/5. Catalyzes the reversible isomerization-deamination of glucosamine 6-phosphate (GlcN6P) to form fructose 6-phosphate (Fru6P) and ammonium ion. In Streptococcus equi subsp. equi (strain 4047), this protein is Glucosamine-6-phosphate deaminase.